Here is a 95-residue protein sequence, read N- to C-terminus: Small ribosomal subunit protein bS6 (95 aa).

The protein belongs to the bacterial ribosomal protein bS6 family.

Its function is as follows. Binds together with bS18 to 16S ribosomal RNA. This Clostridium beijerinckii (strain ATCC 51743 / NCIMB 8052) (Clostridium acetobutylicum) protein is Small ribosomal subunit protein bS6.